The following is a 151-amino-acid chain: MRTYDFSPLWRSTIGFDRLFDLVETAQRAGEDNYPPYNIERVSEDRYQISLAIAGFSPDEVSVTAEQNAVIVEGNKADKAEREYLYRGISARPFKRQFNLADYVQVQSAAFENGLLKIELIREIPEAMKPRRIAINAAPSGTVHQLEGRAA.

The 111-residue stretch at 28-138 (RAGEDNYPPY…KPRRIAINAA (111 aa)) folds into the sHSP domain.

Belongs to the small heat shock protein (HSP20) family.

The protein is Small heat shock protein HspH (hspH) of Bradyrhizobium diazoefficiens (strain JCM 10833 / BCRC 13528 / IAM 13628 / NBRC 14792 / USDA 110).